Reading from the N-terminus, the 324-residue chain is Putative S-adenosyl-L-methionine-dependent methyltransferase MMAR_1059 (324 aa).

Residues Asp138 and 167 to 168 (DL) contribute to the S-adenosyl-L-methionine site.

It belongs to the UPF0677 family.

Functionally, exhibits S-adenosyl-L-methionine-dependent methyltransferase activity. This chain is Putative S-adenosyl-L-methionine-dependent methyltransferase MMAR_1059, found in Mycobacterium marinum (strain ATCC BAA-535 / M).